The sequence spans 83 residues: U25-theraphotoxin-Cg1a (83 aa).

An N-terminal signal peptide occupies residues 1–23 (MRFHTLLFLSFLLLVSCALICTA). A propeptide spanning residues 24–48 (QHPGLKKSGMFHENVGKGQHIEKKR) is cleaved from the precursor. Disulfide bonds link C50/C66, C57/C71, and C65/C81.

Belongs to the neurotoxin 07 (Beta/delta-agtx) family. 03 (aga-4) subfamily. JZTX sub-subfamily. As to expression, expressed by the venom gland.

It localises to the secreted. In terms of biological role, inhibits TTX-sensitive sodium currents in rat dorsal root ganglion (DRG) neurons. This is U25-theraphotoxin-Cg1a from Chilobrachys guangxiensis (Chinese earth tiger tarantula).